Here is a 76-residue protein sequence, read N- to C-terminus: MANRPLFKRKKFCRFTAEGIKKIDYKDVDLLKDFISENGRIIPARITGTRSYYQRQLNLAIERARFLALLPYTDQH.

It belongs to the bacterial ribosomal protein bS18 family. In terms of assembly, part of the 30S ribosomal subunit. Forms a tight heterodimer with protein bS6.

In terms of biological role, binds as a heterodimer with protein bS6 to the central domain of the 16S rRNA, where it helps stabilize the platform of the 30S subunit. The polypeptide is Small ribosomal subunit protein bS18 (Nitrosomonas eutropha (strain DSM 101675 / C91 / Nm57)).